The sequence spans 562 residues: Ycf55-like protein (562 aa).

Residues 7-125 enclose the Response regulatory domain; it reads TIVIVDEDPV…DLVTGLKQVH (119 aa).

The protein belongs to the ycf55 family.

The chain is Ycf55-like protein from Synechocystis sp. (strain ATCC 27184 / PCC 6803 / Kazusa).